The sequence spans 559 residues: T-complex protein 1 subunit gamma (559 aa).

Cysteines 368 and 374 form a disulfide. The tract at residues 531–559 is disordered; sequence KDKRGGAGQRGGDRGQGDQEETFGDQRDG.

This sequence belongs to the TCP-1 chaperonin family. In terms of assembly, heterooligomeric complex of about 850 to 900 kDa that forms two stacked rings, 12 to 16 nm in diameter.

Its subcellular location is the cytoplasm. Molecular chaperone; assists the folding of proteins upon ATP hydrolysis. Known to play a role, in vitro, in the folding of actin and tubulin. The protein is T-complex protein 1 subunit gamma of Oxytricha granulifera (Ciliate).